Here is a 452-residue protein sequence, read N- to C-terminus: Prenyltransferase fsdK (452 aa).

Belongs to the tryptophan dimethylallyltransferase family.

It functions in the pathway mycotoxin biosynthesis. Prenyltransferase; part of the gene cluster that mediates the biosynthesis of fusaridione A, a bright yellow trans-fused decalin-containing tetramic acid with antimicrobial activity. The PKS module of fsdS catalyzes the formation of the polyketide unit which is then conjugated to L-tyrosine by the condensation domain of the fsdS NRPS module. Activity of the Dieckmann cyclase domain (RED) results in release of the intermediate fusaridione A. The unstable pyrrolidinedione ring of fusaridione A is opened through a reverse-Dieckmann reaction to afford its ring-opened form. The chain is Prenyltransferase fsdK from Fusarium heterosporum.